The sequence spans 101 residues: Small ribosomal subunit protein uS14 (101 aa).

This sequence belongs to the universal ribosomal protein uS14 family. As to quaternary structure, part of the 30S ribosomal subunit. Contacts proteins S3 and S10.

Functionally, binds 16S rRNA, required for the assembly of 30S particles and may also be responsible for determining the conformation of the 16S rRNA at the A site. This is Small ribosomal subunit protein uS14 from Bordetella petrii (strain ATCC BAA-461 / DSM 12804 / CCUG 43448).